The chain runs to 431 residues: Enolase (431 aa).

Q166 contributes to the (2R)-2-phosphoglycerate binding site. Catalysis depends on E208, which acts as the Proton donor. Positions 245, 288, and 315 each coordinate Mg(2+). The (2R)-2-phosphoglycerate site is built by K340, R369, S370, and K391. K340 (proton acceptor) is an active-site residue.

It belongs to the enolase family. Mg(2+) is required as a cofactor.

The protein localises to the cytoplasm. The protein resides in the secreted. It localises to the cell surface. It catalyses the reaction (2R)-2-phosphoglycerate = phosphoenolpyruvate + H2O. It participates in carbohydrate degradation; glycolysis; pyruvate from D-glyceraldehyde 3-phosphate: step 4/5. Catalyzes the reversible conversion of 2-phosphoglycerate (2-PG) into phosphoenolpyruvate (PEP). It is essential for the degradation of carbohydrates via glycolysis. In Clostridium perfringens (strain 13 / Type A), this protein is Enolase.